A 393-amino-acid polypeptide reads, in one-letter code: MNHSPQSARPVSIMRRFLDSEAAGGITLMAAAALALIVANSPFAQTYFDALHLYIGPLSLAHWINDALMAIFFLLVGLEIKREMLDGQLASWPNRMLPGIAAAGGVILPAIIFAVLNHDNPAKLRGWAVPSATDIAFALGVLSLLGSRAPSSLKVFLATLAILDDLAAVVIIAIFYTAEISMPYLGAAFITAAVLFVMNRMGVVKLLPYLISAVILWFFVFNSGVHATVAGVVAALMIPLKPAPGRPDDMTSPLHKLEHALAKPVAFIVVPIFGFANAGISFKGLEASVLGDTLTLGILLGLFLGKQFGVFGAAWLAIKTGLAEKPMGASWVQLYGVAILCGIGFTMSIFIGLLSFPSDLMQTETKIGVLSGSALSAICGYLLLRAAARPKRG.

The next 12 membrane-spanning stretches (helical) occupy residues 23–43, 58–78, 96–116, 126–146, 155–175, 178–198, 201–221, 224–244, 265–285, 298–318, 334–354, and 367–387; these read AGGI…NSPF, LSLA…LVGL, MLPG…FAVL, GWAV…SLLG, VFLA…IAIF, AEIS…LFVM, MGVV…FFVF, GVHA…KPAP, VAFI…FKGL, ILLG…WLAI, LYGV…IGLL, and IGVL…LRAA.

The protein belongs to the NhaA Na(+)/H(+) (TC 2.A.33) antiporter family.

The protein resides in the cell inner membrane. The enzyme catalyses Na(+)(in) + 2 H(+)(out) = Na(+)(out) + 2 H(+)(in). Its function is as follows. Na(+)/H(+) antiporter that extrudes sodium in exchange for external protons. In Brucella canis (strain ATCC 23365 / NCTC 10854 / RM-666), this protein is Na(+)/H(+) antiporter NhaA.